The chain runs to 150 residues: Large ribosomal subunit protein bL9 (150 aa).

Belongs to the bacterial ribosomal protein bL9 family.

In terms of biological role, binds to the 23S rRNA. The chain is Large ribosomal subunit protein bL9 from Cupriavidus taiwanensis (strain DSM 17343 / BCRC 17206 / CCUG 44338 / CIP 107171 / LMG 19424 / R1) (Ralstonia taiwanensis (strain LMG 19424)).